The chain runs to 1191 residues: Major DNA-binding protein (1191 aa).

Residues 288-307 (ETTKGQSKMGKREGSDVSGG) form a disordered region. A zinc finger spans residues 498 to 511 (CELCDKTSRIYCAH). The Required for filament formation signature appears at 841-842 (FW). The tract at residues 1166–1191 (KRPNMNVFDLEPIPEKRVPVLSVDML) is required for nuclear localization.

The protein belongs to the herpesviridae major DNA-binding protein family. As to quaternary structure, homooligomers. Forms double-helical filaments necessary for the formation of replication compartments within the host nucleus. Interacts with the origin-binding protein. Interacts with the helicase primase complex; this interaction stimulates primer synthesis activity of the helicase-primase complex. Interacts with the DNA polymerase. Interacts with the alkaline exonuclease; this interaction increases its nuclease processivity.

The protein localises to the host nucleus. Its function is as follows. Plays several crucial roles in viral infection. Participates in the opening of the viral DNA origin to initiate replication by interacting with the origin-binding protein. May disrupt loops, hairpins and other secondary structures present on ssDNA to reduce and eliminate pausing of viral DNA polymerase at specific sites during elongation. Promotes viral DNA recombination by performing strand-transfer, characterized by the ability to transfer a DNA strand from a linear duplex to a complementary single-stranded DNA circle. Can also catalyze the renaturation of complementary single strands. Additionally, reorganizes the host cell nucleus, leading to the formation of prereplicative sites and replication compartments. This process is driven by the protein which can form double-helical filaments in the absence of DNA. The protein is Major DNA-binding protein of Gallid herpesvirus 2 (strain Chicken/Md5/ATCC VR-987) (GaHV-2).